A 96-amino-acid chain; its full sequence is Cysteine proteinase (96 aa).

Cys-25 and Cys-79 are oxidised to a cystine. Residues His-31 and Asn-58 contribute to the active site.

This sequence belongs to the peptidase C1 family.

The polypeptide is Cysteine proteinase (Carica papaya (Papaya)).